A 1098-amino-acid polypeptide reads, in one-letter code: Probable arabinosyltransferase B (1098 aa).

A run of 12 helical transmembrane segments spans residues 28-50 (WVAT…LPVV), 217-239 (LKLL…LWRL), 271-293 (ASWR…WHVI), 402-419 (LRPE…YVLI), 434-456 (AVVT…AALV), 472-494 (LVGT…TVVF), 541-558 (FGFL…FIML), 570-587 (PAWR…FLMF), 597-619 (GLFA…PSVL), 626-648 (MAFL…GWWY), 663-685 (IDGI…YAAW), and 698-720 (LIRA…VFVA).

It belongs to the emb family.

It is found in the cell membrane. Functionally, arabinosyl transferase responsible for the polymerization of arabinose into the arabinan of arabinogalactan. In Mycobacterium tuberculosis (strain CDC 1551 / Oshkosh), this protein is Probable arabinosyltransferase B (embB).